We begin with the raw amino-acid sequence, 496 residues long: Probable CtpA-like serine protease (496 aa).

The segment covering 1–16 (MDDKQHTSSSDDERAE) has biased composition (basic and acidic residues). The tract at residues 1–27 (MDDKQHTSSSDDERAEIATSNQDQETN) is disordered. Positions 18–27 (ATSNQDQETN) are enriched in polar residues. A helical transmembrane segment spans residues 39–59 (FISILIGTTLITAVITVVAYI). The PDZ domain occupies 124-206 (TKSFNEGVSG…TEVTLTVQRG (83 aa)). Catalysis depends on charge relay system residues serine 329, aspartate 340, and lysine 354.

The protein belongs to the peptidase S41A family.

Its subcellular location is the cell membrane. This chain is Probable CtpA-like serine protease, found in Staphylococcus aureus (strain Mu50 / ATCC 700699).